Consider the following 531-residue polypeptide: NADH-quinone oxidoreductase subunit N (531 aa).

Transmembrane regions (helical) follow at residues 8 to 28 (VEYF…AGVL), 41 to 61 (AQVT…IVVA), 81 to 101 (ATLF…VFMA), 146 to 166 (GATQ…MMVF), 172 to 192 (LLTM…MCGL), 208 to 228 (FLLG…LYGA), 250 to 270 (ALAG…AVPF), 282 to 302 (PTPI…GALL), 318 to 338 (PVLW…AVNQ), 350 to 370 (VAHV…GLSA), 372 to 392 (LFYL…VGLV), 418 to 438 (IVGV…LTSG), 453 to 473 (GAVP…YFYV), and 500 to 520 (AAIA…QPVL).

Belongs to the complex I subunit 2 family. As to quaternary structure, NDH-1 is composed of 14 different subunits. Subunits NuoA, H, J, K, L, M, N constitute the membrane sector of the complex.

The protein localises to the cell membrane. It carries out the reaction a quinone + NADH + 5 H(+)(in) = a quinol + NAD(+) + 4 H(+)(out). In terms of biological role, NDH-1 shuttles electrons from NADH, via FMN and iron-sulfur (Fe-S) centers, to quinones in the respiratory chain. The immediate electron acceptor for the enzyme in this species is believed to be a menaquinone. Couples the redox reaction to proton translocation (for every two electrons transferred, four hydrogen ions are translocated across the cytoplasmic membrane), and thus conserves the redox energy in a proton gradient. The sequence is that of NADH-quinone oxidoreductase subunit N from Mycobacterium bovis (strain ATCC BAA-935 / AF2122/97).